Consider the following 162-residue polypeptide: RNA pyrophosphohydrolase (162 aa).

The 145-residue stretch at 11–155 (PYRPCVGIVL…KRAVYEEVVA (145 aa)) folds into the Nudix hydrolase domain. The short motif at 45–66 (GGIDEGEKPREAALRELWEETG) is the Nudix box element.

It belongs to the Nudix hydrolase family. RppH subfamily. Requires a divalent metal cation as cofactor.

Accelerates the degradation of transcripts by removing pyrophosphate from the 5'-end of triphosphorylated RNA, leading to a more labile monophosphorylated state that can stimulate subsequent ribonuclease cleavage. The protein is RNA pyrophosphohydrolase of Cereibacter sphaeroides (strain ATCC 17023 / DSM 158 / JCM 6121 / CCUG 31486 / LMG 2827 / NBRC 12203 / NCIMB 8253 / ATH 2.4.1.) (Rhodobacter sphaeroides).